Reading from the N-terminus, the 176-residue chain is Superoxide oxidase CybB (176 aa).

At 1–7 (MENKYSR) the chain is on the cytoplasmic side. A helical transmembrane segment spans residues 8–29 (LQISIHWLVFLLVIAAYCAMEF). His-13 contacts heme b. The Periplasmic segment spans residues 30–39 (RGFFPRSDRP). Residues 40–64 (LINMIHVSCGISILVLMVVRLLLRL) traverse the membrane as a helical segment. His-45 contacts heme b. At 65–77 (KYPTPPIIPKPKP) the chain is on the cytoplasmic side. A helical transmembrane segment spans residues 78 to 103 (MMTGLAHLGHLVIYLLFIALPVIGLV). Topologically, residues 104-135 (MMYNRGNPWFAFGLTMPYASEANFERVDSLKS) are periplasmic. The helical transmembrane segment at 136-158 (WHETLANLGYFVIGLHAAAALAH) threads the bilayer. His-137 and His-151 together coordinate heme b. The Cytoplasmic portion of the chain corresponds to 159–176 (HYFWKDNTLLRMMPRKRS).

It belongs to the cytochrome b561 family. As to quaternary structure, monomer. Heme b is required as a cofactor.

The protein localises to the cell inner membrane. It carries out the reaction a ubiquinol + 2 O2 = 2 superoxide + a ubiquinone + 2 H(+). It catalyses the reaction a menaquinol + 2 O2 = 2 superoxide + a menaquinone + 2 H(+). Its activity is regulated as follows. Quinone binding to the enzyme accelerates the reaction with superoxide. B-type di-heme cytochrome. Catalyzes the oxidation of superoxide to molecular oxygen and transfers the extracted electrons to ubiquinone through the two hemes. Can also use menaquinone. The enzyme may be responsible for the detoxification of the superoxide anion produced in the membrane or at its surface. However, it can also efficiently catalyze the formation of superoxide from ubiquinol under physiological conditions. The sequence is that of Superoxide oxidase CybB from Escherichia coli (strain K12).